The primary structure comprises 427 residues: Glutamyl-tRNA reductase (427 aa).

Substrate-binding positions include 49–52 (TCNR), serine 101, 106–108 (EPQ), and glutamine 112. The active-site Nucleophile is the cysteine 50. 181 to 186 (GAGETI) provides a ligand contact to NADP(+). The interval 407 to 427 (FPATPGYRHPPVRPDDADPAP) is disordered. Positions 418–427 (VRPDDADPAP) are enriched in basic and acidic residues.

The protein belongs to the glutamyl-tRNA reductase family. Homodimer.

The enzyme catalyses (S)-4-amino-5-oxopentanoate + tRNA(Glu) + NADP(+) = L-glutamyl-tRNA(Glu) + NADPH + H(+). The protein operates within porphyrin-containing compound metabolism; protoporphyrin-IX biosynthesis; 5-aminolevulinate from L-glutamyl-tRNA(Glu): step 1/2. Functionally, catalyzes the NADPH-dependent reduction of glutamyl-tRNA(Glu) to glutamate 1-semialdehyde (GSA). This is Glutamyl-tRNA reductase from Stenotrophomonas maltophilia (strain R551-3).